The following is a 556-amino-acid chain: Glypican-4 (556 aa).

The N-terminal stretch at 1-18 is a signal peptide; sequence MARFGLPALLCTLAVLSA. The residue at position 357 (serine 357) is a Phosphoserine. O-linked (Xyl...) (glycosaminoglycan) serine glycans are attached at residues serine 494, serine 498, and serine 500. N-linked (GlcNAc...) asparagine glycosylation is present at asparagine 514. Residue serine 529 is the site of GPI-anchor amidated serine attachment. Positions 530–556 are cleaved as a propeptide — removed in mature form; it reads AGVRPGAQAYLLTVFCILFLVMQREWR.

Belongs to the glypican family.

The protein localises to the cell membrane. The protein resides in the secreted. It localises to the extracellular space. Functionally, cell surface proteoglycan that bears heparan sulfate. May be involved in the development of kidney tubules and of the central nervous system. This Homo sapiens (Human) protein is Glypican-4 (GPC4).